The primary structure comprises 301 residues: Inactive C-alpha-formylglycine-generating enzyme 2 (301 aa).

Positions 1–25 (MGISLSPLLTVLSLLSGRWLELGNG) are cleaved as a signal peptide. Cysteine 156 and cysteine 290 are oxidised to a cystine. Asparagine 191 carries an N-linked (GlcNAc...) asparagine glycan. Residues asparagine 194, leucine 195, aspartate 208, phenylalanine 210, aspartate 229, glycine 232, valine 234, and glutamate 236 each contribute to the Ca(2+) site. Positions 274 to 284 (RMGNTPDSASD) are enriched in polar residues. Positions 274 to 301 (RMGNTPDSASDNLGFRCASGAGRPPGEL) are disordered. A Non-canonical ER retention motif motif is present at residues 298 to 301 (PGEL).

Belongs to the sulfatase-modifying factor family. In terms of assembly, homodimer and heterodimer with SUMF1.

Its subcellular location is the endoplasmic reticulum lumen. Its function is as follows. Lacks formylglycine generating activity and is unable to convert newly synthesized inactive sulfatases to their active form. Inhibits the activation of sulfatases by SUMF1. The protein is Inactive C-alpha-formylglycine-generating enzyme 2 of Bos taurus (Bovine).